The primary structure comprises 297 residues: ER membrane protein complex subunit 2 (297 aa).

Residue A2 is modified to N-acetylalanine. TPR repeat units follow at residues H87–N120, Q155–N188, and C192–N225. K255 carries the N6-acetyllysine modification.

The protein belongs to the EMC2 family. As to quaternary structure, component of the ER membrane protein complex (EMC). Interacts with WNK1 (via amphipathic alpha-helix region); promoting the ER membrane protein complex assembly by preventing EMC2 ubiquitination. Ubiquitinated when soluble in the cytoplasm, leading to its degradation by the proteasome. Interaction with EMC2 prevents its ubiquitination and degradation.

It localises to the endoplasmic reticulum membrane. Part of the endoplasmic reticulum membrane protein complex (EMC) that enables the energy-independent insertion into endoplasmic reticulum membranes of newly synthesized membrane proteins. Preferentially accommodates proteins with transmembrane domains that are weakly hydrophobic or contain destabilizing features such as charged and aromatic residues. Involved in the cotranslational insertion of multi-pass membrane proteins in which stop-transfer membrane-anchor sequences become ER membrane spanning helices. It is also required for the post-translational insertion of tail-anchored/TA proteins in endoplasmic reticulum membranes. By mediating the proper cotranslational insertion of N-terminal transmembrane domains in an N-exo topology, with translocated N-terminus in the lumen of the ER, controls the topology of multi-pass membrane proteins like the G protein-coupled receptors. By regulating the insertion of various proteins in membranes, it is indirectly involved in many cellular processes. This chain is ER membrane protein complex subunit 2, found in Pongo abelii (Sumatran orangutan).